Consider the following 341-residue polypeptide: L-threonine 3-dehydrogenase (341 aa).

Cys-38 is a binding site for Zn(2+). Residues Thr-40 and His-43 each act as charge relay system in the active site. Residues His-63, Glu-64, Cys-93, Cys-96, Cys-99, and Cys-107 each contribute to the Zn(2+) site. NAD(+) is bound by residues Ile-175, Asp-195, Arg-200, 262-264 (LGI), and 286-287 (IY).

This sequence belongs to the zinc-containing alcohol dehydrogenase family. In terms of assembly, homotetramer. The cofactor is Zn(2+).

Its subcellular location is the cytoplasm. It catalyses the reaction L-threonine + NAD(+) = (2S)-2-amino-3-oxobutanoate + NADH + H(+). It functions in the pathway amino-acid degradation; L-threonine degradation via oxydo-reductase pathway; glycine from L-threonine: step 1/2. In terms of biological role, catalyzes the NAD(+)-dependent oxidation of L-threonine to 2-amino-3-ketobutyrate. In Shewanella sediminis (strain HAW-EB3), this protein is L-threonine 3-dehydrogenase.